Here is a 173-residue protein sequence, read N- to C-terminus: Ribosome maturation factor RimM (173 aa).

The 73-residue stretch at 98-170 folds into the PRC barrel domain; that stretch reads EDEYYWCDLI…RMLITPLEGL (73 aa).

Belongs to the RimM family. Binds ribosomal protein uS19.

It localises to the cytoplasm. In terms of biological role, an accessory protein needed during the final step in the assembly of 30S ribosomal subunit, possibly for assembly of the head region. Essential for efficient processing of 16S rRNA. May be needed both before and after RbfA during the maturation of 16S rRNA. It has affinity for free ribosomal 30S subunits but not for 70S ribosomes. The polypeptide is Ribosome maturation factor RimM (Pelobacter propionicus (strain DSM 2379 / NBRC 103807 / OttBd1)).